The sequence spans 564 residues: MFSRSDREVDDLAGNMSHLGFYDLNIPKPTSPQAQYRPARKSENGRLTPGLPRSYKPCDSDDQDTFKNRISLNHSPKKLPKDFHERASQSKTQRVVNVCQLYFLDYYCDMFDYVISRRQRTKQVLRYLEQQRSVKNVSNKVLNEEWALYLQREHEVLRKRRLKPKHKDFQILTQVGQGGYGQVYLAKKKDSDEICALKILNKKLLFKLNETNHVLTERDILTTTRSDWLVKLLYAFQDPESLYLAMEFVPGGDFRTLLINTRILKSGHARFYISEMFCAVNALHELGYTHRDLKPENFLIDATGHIKLTDFGLAAGTVSNERIESMKIRLEEVKNLEFPAFTERSIEDRRKIYHNMRKTEINYANSMVGSPDYMALEVLEGKKYDFTVDYWSLGCMLFESLVGYTPFSGSSTNETYENLRYWKKTLRRPRTEDRRAAFSDRTWDLITRLIADPINRVRSFEQVRKMSYFAEINFETLRTSSPPFIPQLDDETDAGYFDDFTNEEDMAKYADVFKRQNKLSAMVDDSAVDSKLVGFTFRHRDGKQGSSGILYNGSEHSDPFSTFY.

Serine 17 carries the post-translational modification Phosphoserine. Residues 24-62 are disordered; it reads LNIPKPTSPQAQYRPARKSENGRLTPGLPRSYKPCDSDD. The 301-residue stretch at 169–469 folds into the Protein kinase domain; it reads FQILTQVGQG…FEQVRKMSYF (301 aa). ATP contacts are provided by residues 175-183 and lysine 198; that span reads VGQGGYGQV. Residue aspartate 292 is the Proton acceptor of the active site. Serine 366 carries the post-translational modification Phosphoserine. The 78-residue stretch at 470 to 547 folds into the AGC-kinase C-terminal domain; it reads AEINFETLRT…RHRDGKQGSS (78 aa). At threonine 536 the chain carries Phosphothreonine.

Belongs to the protein kinase superfamily. Ser/Thr protein kinase family.

It carries out the reaction L-seryl-[protein] + ATP = O-phospho-L-seryl-[protein] + ADP + H(+). The catalysed reaction is L-threonyl-[protein] + ATP = O-phospho-L-threonyl-[protein] + ADP + H(+). In terms of biological role, is probably a Ser/Thr-protein kinase that may function in initiation of DNA synthesis and also in late nuclear division. In Saccharomyces cerevisiae (strain ATCC 204508 / S288c) (Baker's yeast), this protein is Serine/threonine-protein kinase DBF20 (DBF20).